A 1076-amino-acid polypeptide reads, in one-letter code: Carbamoyl phosphate synthase large chain (1076 aa).

The carboxyphosphate synthetic domain stretch occupies residues 1-403; sequence MPKRTDIQSI…SLQKALRGLE (403 aa). Residues Arg129, Arg169, Gly175, Gly176, Glu208, Leu210, Glu215, Gly241, Val242, His243, Gln285, and Glu299 each contribute to the ATP site. Positions 133–328 constitute an ATP-grasp 1 domain; sequence DQAMKRIGLE…IAKIAAKLAV (196 aa). Mg(2+) is bound by residues Gln285, Glu299, and Asn301. 3 residues coordinate Mn(2+): Gln285, Glu299, and Asn301. An oligomerization domain region spans residues 404-553; sequence TGNDGLDPKV…YSSYEEECEA (150 aa). Residues 554-935 are carbamoyl phosphate synthetic domain; that stretch reads EVSDRPKIMV…AFYKAQLGAG (382 aa). One can recognise an ATP-grasp 2 domain in the interval 678-869; sequence QHMVDKLGLK…LAQVAARCMA (192 aa). Positions 714, 753, 755, 760, 785, 786, 787, 788, 828, and 840 each coordinate ATP. 3 residues coordinate Mg(2+): Gln828, Glu840, and Asn842. Mn(2+) contacts are provided by Gln828, Glu840, and Asn842. The MGS-like domain occupies 936–1076; sequence EAIPALEGER…LQELHAGVSQ (141 aa). The interval 936–1076 is allosteric domain; that stretch reads EAIPALEGER…LQELHAGVSQ (141 aa).

This sequence belongs to the CarB family. In terms of assembly, composed of two chains; the small (or glutamine) chain promotes the hydrolysis of glutamine to ammonia, which is used by the large (or ammonia) chain to synthesize carbamoyl phosphate. Tetramer of heterodimers (alpha,beta)4. Mg(2+) is required as a cofactor. The cofactor is Mn(2+).

The enzyme catalyses hydrogencarbonate + L-glutamine + 2 ATP + H2O = carbamoyl phosphate + L-glutamate + 2 ADP + phosphate + 2 H(+). The catalysed reaction is hydrogencarbonate + NH4(+) + 2 ATP = carbamoyl phosphate + 2 ADP + phosphate + 2 H(+). It participates in amino-acid biosynthesis; L-arginine biosynthesis; carbamoyl phosphate from bicarbonate: step 1/1. It functions in the pathway pyrimidine metabolism; UMP biosynthesis via de novo pathway; (S)-dihydroorotate from bicarbonate: step 1/3. Functionally, large subunit of the glutamine-dependent carbamoyl phosphate synthetase (CPSase). CPSase catalyzes the formation of carbamoyl phosphate from the ammonia moiety of glutamine, carbonate, and phosphate donated by ATP, constituting the first step of 2 biosynthetic pathways, one leading to arginine and/or urea and the other to pyrimidine nucleotides. The large subunit (synthetase) binds the substrates ammonia (free or transferred from glutamine from the small subunit), hydrogencarbonate and ATP and carries out an ATP-coupled ligase reaction, activating hydrogencarbonate by forming carboxy phosphate which reacts with ammonia to form carbamoyl phosphate. This Halomonas eurihalina protein is Carbamoyl phosphate synthase large chain.